The chain runs to 158 residues: Endoribonuclease YbeY (158 aa).

3 residues coordinate Zn(2+): His-118, His-122, and His-128.

Belongs to the endoribonuclease YbeY family. The cofactor is Zn(2+).

It is found in the cytoplasm. Its function is as follows. Single strand-specific metallo-endoribonuclease involved in late-stage 70S ribosome quality control and in maturation of the 3' terminus of the 16S rRNA. This Bartonella henselae (strain ATCC 49882 / DSM 28221 / CCUG 30454 / Houston 1) (Rochalimaea henselae) protein is Endoribonuclease YbeY.